The chain runs to 383 residues: Lipid-A-disaccharide synthase (383 aa).

The protein belongs to the LpxB family.

It carries out the reaction a lipid X + a UDP-2-N,3-O-bis[(3R)-3-hydroxyacyl]-alpha-D-glucosamine = a lipid A disaccharide + UDP + H(+). The protein operates within bacterial outer membrane biogenesis; LPS lipid A biosynthesis. Its function is as follows. Condensation of UDP-2,3-diacylglucosamine and 2,3-diacylglucosamine-1-phosphate to form lipid A disaccharide, a precursor of lipid A, a phosphorylated glycolipid that anchors the lipopolysaccharide to the outer membrane of the cell. The polypeptide is Lipid-A-disaccharide synthase (Aliivibrio fischeri (strain ATCC 700601 / ES114) (Vibrio fischeri)).